We begin with the raw amino-acid sequence, 505 residues long: Argininosuccinate lyase (505 aa).

It belongs to the lyase 1 family. Argininosuccinate lyase subfamily.

It is found in the cytoplasm. The enzyme catalyses 2-(N(omega)-L-arginino)succinate = fumarate + L-arginine. It participates in amino-acid biosynthesis; L-arginine biosynthesis; L-arginine from L-ornithine and carbamoyl phosphate: step 3/3. This Rhodococcoides fascians (Rhodococcus fascians) protein is Argininosuccinate lyase.